A 241-amino-acid polypeptide reads, in one-letter code: ATP synthase subunit a (241 aa).

Transmembrane regions (helical) follow at residues 30–50, 91–111, 128–148, 193–213, and 214–234; these read GQVF…ISFG, FIGT…LIPW, INTT…AGLS, LVVG…VMFL, and GLFT…YYIG.

This sequence belongs to the ATPase A chain family. As to quaternary structure, F-type ATPases have 2 components, CF(1) - the catalytic core - and CF(0) - the membrane proton channel. CF(1) has five subunits: alpha(3), beta(3), gamma(1), delta(1), epsilon(1). CF(0) has four main subunits: a, b, b' and c.

Its subcellular location is the cellular thylakoid membrane. Its function is as follows. Key component of the proton channel; it plays a direct role in the translocation of protons across the membrane. In Prochlorococcus marinus (strain AS9601), this protein is ATP synthase subunit a.